The sequence spans 111 residues: Cell cycle protein GpsB (111 aa).

Positions 32–63 (LDDIMKDYDAYEAIIKELKGEIARLKAQAANS) form a coiled coil. A disordered region spans residues 59–80 (QAANSPKTTLPTEESNDVLRTE). Residues 60–71 (AANSPKTTLPTE) show a composition bias toward polar residues.

The protein belongs to the GpsB family. Forms polymers through the coiled coil domains. Interacts with PBP1, MreC and EzrA.

The protein localises to the cytoplasm. Divisome component that associates with the complex late in its assembly, after the Z-ring is formed, and is dependent on DivIC and PBP2B for its recruitment to the divisome. Together with EzrA, is a key component of the system that regulates PBP1 localization during cell cycle progression. Its main role could be the removal of PBP1 from the cell pole after pole maturation is completed. Also contributes to the recruitment of PBP1 to the division complex. Not essential for septum formation. This chain is Cell cycle protein GpsB, found in Streptococcus suis (strain 98HAH33).